A 465-amino-acid chain; its full sequence is E3 ubiquitin-protein ligase parkin (465 aa).

Residues 1–76 (MIVFVRFNSS…VHIVQRPWRK (76 aa)) enclose the Ubiquitin-like domain. Serine 65 carries the phosphoserine; by PINK1 modification. A disordered region spans residues 77–99 (GQEMNATGGDDPRNAAGGCEREP). Residues 77–237 (GQEMNATGGD…LIATNSRNIT (161 aa)) form a necessary for PINK1-dependent localization to mitochondria region. Residues 141–225 (SIYNSFYVYC…PTSDKETSVA (85 aa)) form an RING-type 0; atypical zinc finger. Threonine 175 is modified (phosphothreonine; by PINK1). Residues 204-238 (TSAEFFFKCGAHPTSDKETSVALHLIATNSRNITC) form an SYT11 binding 1 region. Threonine 217 bears the Phosphothreonine mark. Residues 234–465 (RNITCITCTD…VCMGDHWFDV (232 aa)) are TRIAD supradomain. The Zn(2+) site is built by cysteine 238, cysteine 241, cysteine 253, histidine 257, cysteine 260, cysteine 263, cysteine 289, cysteine 293, cysteine 332, and cysteine 337. Residues 238–293 (CITCTDVRSPVLVFQCNSRHVICLDCFHLYCVTRLNDRQFVHDPQLGYSLPCVAGC) form an RING-type 1 zinc finger. An SYT11 binding 2 region spans residues 257–293 (HVICLDCFHLYCVTRLNDRQFVHDPQLGYSLPCVAGC). The IBR-type zinc-finger motif lies at 313-377 (NRYQQYGAEE…CKEAYHEGEC (65 aa)). Residue lysine 349 forms a Glycyl lysine isopeptide (Lys-Gly) (interchain with G-Cter in ISG15) linkage. Positions 352, 360, 365, and 368 each coordinate Zn(2+). Residue lysine 369 forms a Glycyl lysine isopeptide (Lys-Gly) (interchain with G-Cter in ISG15) linkage. Zn(2+) contacts are provided by histidine 373 and cysteine 377. Residues 378-410 (SAVFEASGTTTQAYRVDERAAEQARWEAASKET) form an REP region. The Zn(2+) site is built by cysteine 418 and cysteine 421. The RING-type 2; atypical zinc finger occupies 418-449 (CPRCHVPVEKNGGCMHMKCPQPQCRLEWCWNC). Residue cysteine 431 is part of the active site. Residues cysteine 436, cysteine 441, cysteine 446, cysteine 449, cysteine 457, and histidine 461 each contribute to the Zn(2+) site.

It belongs to the RBR family. Parkin subfamily. Forms an E3 ubiquitin ligase complex with UBE2L3 or UBE2L6. Mediates 'Lys-63'-linked polyubiquitination by associating with UBE2V1. Part of a SCF-like complex, consisting of PRKN, CUL1 and FBXW7. Interacts with SNCAIP. Binds to the C2A and C2B domains of SYT11. Interacts and regulates the turnover of SEPTIN5. Part of a complex, including STUB1, HSP70 and GPR37. The amount of STUB1 in the complex increases during ER stress. STUB1 promotes the dissociation of HSP70 from PRKN and GPR37, thus facilitating PRKN-mediated GPR37 ubiquitination. HSP70 transiently associates with unfolded GPR37 and inhibits the E3 activity of PRKN, whereas, STUB1 enhances the E3 activity of PRKN through promotion of dissociation of HSP70 from PRKN-GPR37 complexes. Interacts with PSMD4 and PACRG. Interacts with LRRK2. Interacts with RANBP2. Interacts with SUMO1 but not SUMO2, which promotes nuclear localization and autoubiquitination. Interacts (via first RING-type domain) with AIMP2 (via N-terminus). Interacts with PSMA7 and RNF41. Interacts with PINK1. Forms a complex with PINK1 and PARK7. Interacts with CHPF, the interaction with isoform 2 may facilitate PRKN transport into the mitochondria. Interacts with MFN2 (phosphorylated), promotes PRKN localization in dysfunctional depolarized mitochondria. Interacts with FBXO7; this promotes translocation to dysfunctional depolarized mitochondria. Interacts with ZNF746. Interacts with heat shock protein 70 family members, including HSPA1L, HSPA1A and HSPA8; interaction HSPA1L promotes translocation to damaged mitochondria. Interacts with BAG4 and, to a lesser extent, BAG5; interaction with BAG4 inhibits translocation to damaged mitochondria. Forms a complex with PRKN and PARK7. Interacts with AMBRA1. ISGylated. Conjugated to ubiquitin-like protein ISG15 upon IFN-beta stimulation. ISGylation positively regulates its E3 ligase activity. Post-translationally, auto-ubiquitinates in an E2-dependent manner leading to its own degradation. Also polyubiquitinated by RNF41 for proteasomal degradation. In terms of processing, S-nitrosylated. The inhibition of PRKN ubiquitin E3 ligase activity by S-nitrosylation could contribute to the degenerative process in PD by impairing the ubiquitination of PRKN substrates. Phosphorylated. Activation requires phosphorylation at Ser-65 by PINK1 and binding to PINK1 phosphorylated ubiquitin. Phosphorylation at Thr-175 by PINK1 and at Thr-217 is important for mitochondrial localization. Highly expressed in the brain including the substantia nigra. Expressed in heart, testis and skeletal muscle. Expression is down-regulated or absent in tumor biopsies, and absent in the brain of PARK2 patients. Overexpression protects dopamine neurons from kainate-mediated apoptosis. Found in serum (at protein level).

The protein localises to the cytoplasm. It is found in the cytosol. Its subcellular location is the nucleus. It localises to the endoplasmic reticulum. The protein resides in the mitochondrion. The protein localises to the mitochondrion outer membrane. It is found in the cell projection. Its subcellular location is the neuron projection. It localises to the postsynaptic density. The protein resides in the presynapse. The catalysed reaction is [E2 ubiquitin-conjugating enzyme]-S-ubiquitinyl-L-cysteine + [acceptor protein]-L-lysine = [E2 ubiquitin-conjugating enzyme]-L-cysteine + [acceptor protein]-N(6)-ubiquitinyl-L-lysine.. Its pathway is protein modification; protein ubiquitination. With respect to regulation, in the autoinhibited state the side chain of Phe-463 inserts into a hydrophobic groove in RING-0, occluding the ubiquitin acceptor site Cys-431, whereas the REP repressor element binds RING-1 and blocks its E2-binding site. Activation of PRKN requires 2 steps: (1) phosphorylation at Ser-65 by PINK1 and (2) binding to phosphorylated ubiquitin, leading to unlock repression of the catalytic Cys-431 by the RING-0 region via an allosteric mechanism and converting PRKN to its fully-active form. According to another report, phosphorylation at Ser-65 by PINK1 is not essential for activation and only binding to phosphorylated ubiquitin is essential to unlock repression. In addition, ISG15 conjugation positively regulates its ubiquitin E3 ligase activity by suppressing the intramolecular interaction that maintains its autoinhibited conformation. Functionally, functions within a multiprotein E3 ubiquitin ligase complex, catalyzing the covalent attachment of ubiquitin moieties onto substrate proteins. Substrates include SYT11 and VDAC1. Other substrates are BCL2, CCNE1, GPR37, RHOT1/MIRO1, MFN1, MFN2, STUB1, SNCAIP, SEPTIN5, TOMM20, USP30, ZNF746, MIRO1 and AIMP2. Mediates monoubiquitination as well as 'Lys-6', 'Lys-11', 'Lys-48'-linked and 'Lys-63'-linked polyubiquitination of substrates depending on the context. Participates in the removal and/or detoxification of abnormally folded or damaged protein by mediating 'Lys-63'-linked polyubiquitination of misfolded proteins such as PARK7: 'Lys-63'-linked polyubiquitinated misfolded proteins are then recognized by HDAC6, leading to their recruitment to aggresomes, followed by degradation. Mediates 'Lys-63'-linked polyubiquitination of a 22 kDa O-linked glycosylated isoform of SNCAIP, possibly playing a role in Lewy-body formation. Mediates monoubiquitination of BCL2, thereby acting as a positive regulator of autophagy. Protects against mitochondrial dysfunction during cellular stress, by acting downstream of PINK1 to coordinate mitochondrial quality control mechanisms that remove and replace dysfunctional mitochondrial components. Depending on the severity of mitochondrial damage and/or dysfunction, activity ranges from preventing apoptosis and stimulating mitochondrial biogenesis to regulating mitochondrial dynamics and eliminating severely damaged mitochondria via mitophagy. Activation and recruitment onto the outer membrane of damaged/dysfunctional mitochondria (OMM) requires PINK1-mediated phosphorylation of both PRKN and ubiquitin. After mitochondrial damage, functions with PINK1 to mediate the decision between mitophagy or preventing apoptosis by inducing either the poly- or monoubiquitination of VDAC1, respectively; polyubiquitination of VDAC1 promotes mitophagy, while monoubiquitination of VDAC1 decreases mitochondrial calcium influx which ultimately inhibits apoptosis. When cellular stress results in irreversible mitochondrial damage, promotes the autophagic degradation of dysfunctional depolarized mitochondria (mitophagy) by promoting the ubiquitination of mitochondrial proteins such as TOMM20, RHOT1/MIRO1, MFN1 and USP30. Preferentially assembles 'Lys-6'-, 'Lys-11'- and 'Lys-63'-linked polyubiquitin chains, leading to mitophagy. The PINK1-PRKN pathway also promotes fission of damaged mitochondria by PINK1-mediated phosphorylation which promotes the PRKN-dependent degradation of mitochondrial proteins involved in fission such as MFN2. This prevents the refusion of unhealthy mitochondria with the mitochondrial network or initiates mitochondrial fragmentation facilitating their later engulfment by autophagosomes. Regulates motility of damaged mitochondria via the ubiquitination and subsequent degradation of MIRO1 and MIRO2; in motor neurons, this likely inhibits mitochondrial intracellular anterograde transport along the axons which probably increases the chance of the mitochondria undergoing mitophagy in the soma. Involved in mitochondrial biogenesis via the 'Lys-48'-linked polyubiquitination of transcriptional repressor ZNF746/PARIS which leads to its subsequent proteasomal degradation and allows activation of the transcription factor PPARGC1A. Limits the production of reactive oxygen species (ROS). Regulates cyclin-E during neuronal apoptosis. In collaboration with CHPF isoform 2, may enhance cell viability and protect cells from oxidative stress. Independently of its ubiquitin ligase activity, protects from apoptosis by the transcriptional repression of p53/TP53. May protect neurons against alpha synuclein toxicity, proteasomal dysfunction, GPR37 accumulation, and kainate-induced excitotoxicity. May play a role in controlling neurotransmitter trafficking at the presynaptic terminal and in calcium-dependent exocytosis. May represent a tumor suppressor gene. The protein is E3 ubiquitin-protein ligase parkin of Homo sapiens (Human).